The primary structure comprises 628 residues: Forkhead box protein O (628 aa).

The residue at position 50 (Thr50) is a Phosphothreonine; by PKB/AKT1. Position 81 is a phosphoserine (Ser81). Residues 101–207 (WGNLSYADLI…ETSRYEKRRG (107 aa)) constitute a DNA-binding region (fork-head). Disordered regions lie at residues 188–210 (KSVR…GRAK) and 223–270 (GLND…SSCG). Ser196 is subject to Phosphoserine; by PKB/AKT1. Polar residues-rich tracts occupy residues 227–236 (ATPSPSSSVS) and 261–270 (RASSNASSCG). The residue at position 264 (Ser264) is a Phosphoserine; by PKB/AKT1. 3 positions are modified to phosphoserine: Ser267, Ser268, and Ser273. Disordered regions lie at residues 327–373 (SAAS…SLQP) and 398–451 (NSVT…QQQQ). Positions 334–343 (TQPPPPPYPA) are enriched in pro residues. Positions 344–359 (PQQQQQQQPQQQQAYT) are enriched in low complexity. Over residues 411 to 423 (SEPSSDSLNTYSN) the composition is skewed to polar residues. Positions 438 to 451 (QQQRQQQQQQQQQQ) are enriched in low complexity.

As to quaternary structure, interacts with melt.

The protein localises to the cytoplasm. Its subcellular location is the nucleus. Its function is as follows. Transcription factor involved in the regulation of the insulin signaling pathway. Consistently activates both the downstream target Thor\d4EBP and the feedback control target InR. Involved in negative regulation of the cell cycle, modulating cell growth and proliferation. In response to cellular stresses, such as nutrient deprivation or increased levels of reactive oxygen species, foxo is activated and inhibits growth through the action of target genes such as Thor. Foxo activated in the adult fat body can regulate lifespan in adults; an insulin peptide itself may function as one secondary messenger of insulin-regulated aging. Also regulates Lip4, homolog of human acid lipases, thereby acting as a key modulator of lipid metabolism by insulin signaling and integrates insulin responses to glucose and lipid homeostasis. This chain is Forkhead box protein O, found in Drosophila willistoni (Fruit fly).